The chain runs to 381 residues: L-lactate dehydrogenase (381 aa).

In terms of domain architecture, FMN hydroxy acid dehydrogenase spans 1–380 (MIISASTDYR…SRDSLVRELG (380 aa)). Tyr24 is a binding site for substrate. FMN is bound by residues Ser106 and Gln127. A substrate-binding site is contributed by Tyr129. Residue Thr155 coordinates FMN. Arg164 contacts substrate. Lys251 serves as a coordination point for FMN. Residue His275 is the Proton acceptor of the active site. Arg278 serves as a coordination point for substrate. Residue 306-330 (DSGIRSGLDVVRMIALGADTVLIGR) participates in FMN binding.

The protein belongs to the FMN-dependent alpha-hydroxy acid dehydrogenase family. In terms of assembly, homotetramer. Requires FMN as cofactor.

The protein resides in the cell inner membrane. It catalyses the reaction (S)-lactate + A = pyruvate + AH2. Its function is as follows. Catalyzes the conversion of L-lactate to pyruvate. Is coupled to the respiratory chain. The sequence is that of L-lactate dehydrogenase from Pseudomonas putida (strain W619).